The chain runs to 430 residues: Serine--tRNA ligase (430 aa).

237-239 (TAE) is an L-serine binding site. ATP is bound at residue 268–270 (RSE). Glu-291 contributes to the L-serine binding site. 355 to 358 (EISS) is a binding site for ATP. Position 391 (Ser-391) interacts with L-serine.

It belongs to the class-II aminoacyl-tRNA synthetase family. Type-1 seryl-tRNA synthetase subfamily. As to quaternary structure, homodimer. The tRNA molecule binds across the dimer.

Its subcellular location is the cytoplasm. It catalyses the reaction tRNA(Ser) + L-serine + ATP = L-seryl-tRNA(Ser) + AMP + diphosphate + H(+). The enzyme catalyses tRNA(Sec) + L-serine + ATP = L-seryl-tRNA(Sec) + AMP + diphosphate + H(+). It participates in aminoacyl-tRNA biosynthesis; selenocysteinyl-tRNA(Sec) biosynthesis; L-seryl-tRNA(Sec) from L-serine and tRNA(Sec): step 1/1. Its function is as follows. Catalyzes the attachment of serine to tRNA(Ser). Is also able to aminoacylate tRNA(Sec) with serine, to form the misacylated tRNA L-seryl-tRNA(Sec), which will be further converted into selenocysteinyl-tRNA(Sec). The chain is Serine--tRNA ligase from Yersinia pseudotuberculosis serotype O:1b (strain IP 31758).